Reading from the N-terminus, the 453-residue chain is UDP-N-acetylmuramate--L-alanyl-gamma-D-glutamyl-meso-2,6-diaminoheptandioate ligase (453 aa).

Residue 111-117 coordinates ATP; the sequence is GTHGKTT.

It belongs to the MurCDEF family. Mpl subfamily. It depends on Mg(2+) as a cofactor.

It carries out the reaction UDP-N-acetyl-alpha-D-muramate + L-alanyl-gamma-D-glutamyl-meso-2,6-diaminopimelate + ATP = UDP-N-acetyl-alpha-D-muramoyl-L-alanyl-gamma-D-glutamyl-meso-2,6-diaminopimelate + ADP + phosphate + H(+). The protein operates within cell wall biogenesis; peptidoglycan recycling. Reutilizes the intact tripeptide L-alanyl-gamma-D-glutamyl-meso-diaminopimelate by linking it to UDP-N-acetylmuramate. This chain is UDP-N-acetylmuramate--L-alanyl-gamma-D-glutamyl-meso-2,6-diaminoheptandioate ligase, found in Haemophilus influenzae (strain ATCC 51907 / DSM 11121 / KW20 / Rd).